Consider the following 1257-residue polypeptide: Pesticidal crystal protein Cry12Aa (1257 aa).

The protein belongs to the delta endotoxin family.

Functionally, endotoxin with nematicidal activity. The chain is Pesticidal crystal protein Cry12Aa (cry12Aa) from Bacillus thuringiensis.